Here is a 734-residue protein sequence, read N- to C-terminus: Elongation factor G, mitochondrial (734 aa).

Residues 1–32 (MTSFLTSRFGGLALRNVMNNKNGINSFGLRCF) constitute a mitochondrion transit peptide. A tr-type G domain is found at 38 to 318 (SGLRNIGISA…GVIKYLPSPN (281 aa)). Residues 47–54 (AHIDSGKT), 114–118 (DTPGH), and 168–171 (NKLD) each bind GTP.

The protein belongs to the TRAFAC class translation factor GTPase superfamily. Classic translation factor GTPase family. EF-G/EF-2 subfamily.

Its subcellular location is the mitochondrion. It carries out the reaction GTP + H2O = GDP + phosphate + H(+). Its pathway is protein biosynthesis; polypeptide chain elongation. Mitochondrial GTPase that catalyzes the GTP-dependent ribosomal translocation step during translation elongation. During this step, the ribosome changes from the pre-translocational (PRE) to the post-translocational (POST) state as the newly formed A-site-bound peptidyl-tRNA and P-site-bound deacylated tRNA move to the P and E sites, respectively. Catalyzes the coordinated movement of the two tRNA molecules, the mRNA and conformational changes in the ribosome. This chain is Elongation factor G, mitochondrial (gfm1), found in Dictyostelium discoideum (Social amoeba).